A 549-amino-acid chain; its full sequence is Glucose-6-phosphate isomerase (549 aa).

The active-site Proton donor is the E355. Residues H386 and K514 contribute to the active site.

Belongs to the GPI family.

The protein localises to the cytoplasm. The enzyme catalyses alpha-D-glucose 6-phosphate = beta-D-fructose 6-phosphate. It participates in carbohydrate biosynthesis; gluconeogenesis. Its pathway is carbohydrate degradation; glycolysis; D-glyceraldehyde 3-phosphate and glycerone phosphate from D-glucose: step 2/4. Catalyzes the reversible isomerization of glucose-6-phosphate to fructose-6-phosphate. The protein is Glucose-6-phosphate isomerase of Salmonella schwarzengrund (strain CVM19633).